The following is a 500-amino-acid chain: MVDGPDEEFEDVPEQVRVRREKRDRILAAGGEAYPVSVPRTDSLADLRERYAHLEAGEETTDQVGVTGRVVFLRGTGKLAFATLQEGDGTRLQVMVSRDGVGEDALAAWKSDVDLGDIVFVHGNVISSRRGELSVLADSWRMASKSLRPLPVLHKELSEETRVRQRYVDLIVREAARTNVRARSNVVRALRRTLEDRGFLEVETPMLQTLHGGASARPFVTRSNAFDTELYLRIAPELFLKRCVVGGIERVFEINRNFRNEGADSTHSPEFAMLETYQAWGDYDSIGELTRALVQNAATEAFGTQLVTLADGSEYDLGGEWTSISMYPSLSASLGEEITPETPREHLIGIAERLGISVDTVRWTHGKLVEELWEHRIADSLHSPTFVRDFPVETSPLVRGHRELPGVVEKWDLYVRGFELATGYSELVDPVVQRERFVEQARLADLGDDEAMRIDEDFLRAQEHGMPPTGGMGMGIDRLLMALTGLGIRETITFPLVKPR.

Mg(2+) contacts are provided by Asp412 and Glu419.

It belongs to the class-II aminoacyl-tRNA synthetase family. In terms of assembly, homodimer. Mg(2+) serves as cofactor.

The protein resides in the cytoplasm. The catalysed reaction is tRNA(Lys) + L-lysine + ATP = L-lysyl-tRNA(Lys) + AMP + diphosphate. The chain is Lysine--tRNA ligase from Kineococcus radiotolerans (strain ATCC BAA-149 / DSM 14245 / SRS30216).